The chain runs to 182 residues: Protein LIGHT-DEPENDENT SHORT HYPOCOTYLS 5 (182 aa).

The segment covering 1–16 has biased composition (low complexity); it reads MEGETAAKAAASSSSS. 2 disordered regions span residues 1 to 22 and 138 to 168; these read MEGE…RYES and ARGI…DAEG. The region spanning 19 to 147 is the ALOG domain; the sequence is RYESQKRRDW…ARGIPYDKKK (129 aa). Positions 145–149 match the Nuclear localization signal motif; it reads KKKRK.

The protein belongs to the plant homeotic and developmental regulators ALOG protein family.

The protein localises to the nucleus. Its function is as follows. Probable transcription regulator that acts as a developmental regulator by promoting cell growth in response to light. This is Protein LIGHT-DEPENDENT SHORT HYPOCOTYLS 5 (LSH5) from Arabidopsis thaliana (Mouse-ear cress).